Reading from the N-terminus, the 224-residue chain is Ribose-5-phosphate isomerase A (224 aa).

Residues 33–36 (TGST), 86–89 (DGAD), and 99–102 (KGGG) contribute to the substrate site. The active-site Proton acceptor is Glu108. Lys126 is a binding site for substrate.

Belongs to the ribose 5-phosphate isomerase family. As to quaternary structure, homodimer.

It carries out the reaction aldehydo-D-ribose 5-phosphate = D-ribulose 5-phosphate. It functions in the pathway carbohydrate degradation; pentose phosphate pathway; D-ribose 5-phosphate from D-ribulose 5-phosphate (non-oxidative stage): step 1/1. In terms of biological role, catalyzes the reversible conversion of ribose-5-phosphate to ribulose 5-phosphate. This Bordetella avium (strain 197N) protein is Ribose-5-phosphate isomerase A.